The chain runs to 105 residues: MTVLCTLMAFVMVVAISSLTVDAIPHSHESYWDQQDDIDRDEFLELLSRLSRTVMNRPEMENSKRGLDLGLSRGFSGSQAAKHLMGLAAANYAGGPGRRRRSEQA.

The first 23 residues, 1–23 (MTVLCTLMAFVMVVAISSLTVDA), serve as a signal peptide directing secretion. A propeptide spanning residues 24-63 (IPHSHESYWDQQDDIDRDEFLELLSRLSRTVMNRPEMENS) is cleaved from the precursor. P96 bears the Proline amide mark. The propeptide occupies 101–105 (RSEQA).

In terms of tissue distribution, expressed in central brain, antennal lobes, retrocerebral complex and gnathal, thoracic and abdominal ganglia but not in optical lobes (at protein level).

It is found in the secreted. In terms of biological role, regulation of fluid secretion. Stimulates Malpighian tubules fluid secretion. This chain is Diuretic hormone class 2, found in Camponotus floridanus (Florida carpenter ant).